The primary structure comprises 1033 residues: Isoleucine--tRNA ligase 2 (1033 aa).

A 'HIGH' region motif is present at residues 47 to 57 (PTANGLPHVGH). The 'KMSKS' region motif lies at 590-594 (KMSKS). K593 serves as a coordination point for ATP.

The protein belongs to the class-I aminoacyl-tRNA synthetase family. IleS type 2 subfamily. As to quaternary structure, monomer. Requires Zn(2+) as cofactor.

The protein resides in the cytoplasm. The catalysed reaction is tRNA(Ile) + L-isoleucine + ATP = L-isoleucyl-tRNA(Ile) + AMP + diphosphate. Catalyzes the attachment of isoleucine to tRNA(Ile). As IleRS can inadvertently accommodate and process structurally similar amino acids such as valine, to avoid such errors it has two additional distinct tRNA(Ile)-dependent editing activities. One activity is designated as 'pretransfer' editing and involves the hydrolysis of activated Val-AMP. The other activity is designated 'posttransfer' editing and involves deacylation of mischarged Val-tRNA(Ile). The protein is Isoleucine--tRNA ligase 2 of Bacillus thuringiensis subsp. konkukian (strain 97-27).